A 941-amino-acid chain; its full sequence is Cell wall protein IFF3 (941 aa).

The first 20 residues, 1–20 (MQLFQNILVSIALLTQVVFA), serve as a signal peptide directing secretion. N-linked (GlcNAc...) asparagine glycans are attached at residues N36, N367, N686, N732, N790, N818, N825, N884, and N917. The GPI-anchor amidated asparagine moiety is linked to residue N917. The propeptide at 918-941 (GSNKESIENIKYLTLVVFGLMMFM) is removed in mature form.

This sequence belongs to the HYR1/IFF family. The GPI-anchor is attached to the protein in the endoplasmic reticulum and serves to target the protein to the cell surface. There, the glucosamine-inositol phospholipid moiety is cleaved off and the GPI-modified mannoprotein is covalently attached via its lipidless GPI glycan remnant to the 1,6-beta-glucan of the outer cell wall layer.

It localises to the secreted. Its subcellular location is the cell wall. It is found in the membrane. Functionally, GPI-anchored cell wall protein involved in cell wall organization, hyphal growth, as well as in host-fungal interaction and virulence. The sequence is that of Cell wall protein IFF3 (IFF3) from Candida albicans (strain SC5314 / ATCC MYA-2876) (Yeast).